The primary structure comprises 423 residues: MAAPRVFPLSCAVQQYAWGKMGYNSEVARLLASSDPLAQIAEDKPYAELWMGTHPRGDAKIFDNGISQKTLGQWIAENQDSLGSKVKDTFNGNLPFLFKVLSVETPLSIQAHPNKELAEKLHLQAPQHYPDANHKPEMAIALTPFQGLCGFRPVEEIVTFLKKVPEFQFLIGDEAATHLKQTMSHDSQAVASALQSCFSHLMKSEKKVVAEQLNLLVKRISQQVAAGNNMEDIFGELLLQLHQQYPGDIGCFAIYFLNLLNLKPGEAMFLEANVPHAYLKGDCVECMACSDNTVRAGLTPKFIDVPTLCEMLSYTPSSSKDRLFLPTRSQEDPYLSIYDPPVPDFAIMKMEVPGSVTEYKVLALDSASILLVVQGTVIASTPTTQTPIPLQRGGVLFIGANESVSLKLTEPKDLLIFRACCLL.

Position 2 is an N-acetylalanine (A2). S102 and S108 each carry phosphoserine. Zn(2+) contacts are provided by Q110, H112, E137, and H276. R295 is a catalytic residue.

The protein belongs to the mannose-6-phosphate isomerase type 1 family. Zn(2+) is required as a cofactor.

Its subcellular location is the cytoplasm. The catalysed reaction is D-mannose 6-phosphate = D-fructose 6-phosphate. Its pathway is nucleotide-sugar biosynthesis; GDP-alpha-D-mannose biosynthesis; alpha-D-mannose 1-phosphate from D-fructose 6-phosphate: step 1/2. Isomerase that catalyzes the interconversion of fructose-6-P and mannose-6-P and has a critical role in the supply of D-mannose derivatives required for many eukaryotic glycosylation reactions. This Macaca fascicularis (Crab-eating macaque) protein is Mannose-6-phosphate isomerase (MPI).